Reading from the N-terminus, the 630-residue chain is Phosphomethylpyrimidine synthase (630 aa).

Residues asparagine 227, methionine 256, tyrosine 285, histidine 321, 341–343 (SRG), 382–385 (DGLR), and glutamate 421 contribute to the substrate site. Histidine 425 serves as a coordination point for Zn(2+). Position 448 (tyrosine 448) interacts with substrate. Zn(2+) is bound at residue histidine 489. Cysteine 569, cysteine 572, and cysteine 577 together coordinate [4Fe-4S] cluster.

The protein belongs to the ThiC family. In terms of assembly, homodimer. [4Fe-4S] cluster serves as cofactor.

The enzyme catalyses 5-amino-1-(5-phospho-beta-D-ribosyl)imidazole + S-adenosyl-L-methionine = 4-amino-2-methyl-5-(phosphooxymethyl)pyrimidine + CO + 5'-deoxyadenosine + formate + L-methionine + 3 H(+). It participates in cofactor biosynthesis; thiamine diphosphate biosynthesis. Its function is as follows. Catalyzes the synthesis of the hydroxymethylpyrimidine phosphate (HMP-P) moiety of thiamine from aminoimidazole ribotide (AIR) in a radical S-adenosyl-L-methionine (SAM)-dependent reaction. This is Phosphomethylpyrimidine synthase from Hydrogenovibrio crunogenus (strain DSM 25203 / XCL-2) (Thiomicrospira crunogena).